The sequence spans 354 residues: DNA polymerase IV (354 aa).

Residues 6–187 form the UmuC domain; sequence IIHVDCDCFY…LPVARLHGVG (182 aa). Mg(2+) is bound by residues D10 and D105. E106 is an active-site residue.

It belongs to the DNA polymerase type-Y family. In terms of assembly, monomer. The cofactor is Mg(2+).

It is found in the cytoplasm. It catalyses the reaction DNA(n) + a 2'-deoxyribonucleoside 5'-triphosphate = DNA(n+1) + diphosphate. Poorly processive, error-prone DNA polymerase involved in untargeted mutagenesis. Copies undamaged DNA at stalled replication forks, which arise in vivo from mismatched or misaligned primer ends. These misaligned primers can be extended by PolIV. Exhibits no 3'-5' exonuclease (proofreading) activity. May be involved in translesional synthesis, in conjunction with the beta clamp from PolIII. This chain is DNA polymerase IV, found in Pseudomonas putida (strain GB-1).